Reading from the N-terminus, the 362-residue chain is Phosphoserine aminotransferase (362 aa).

L-glutamate is bound at residue R43. Pyridoxal 5'-phosphate contacts are provided by residues 77–78 (AR), W103, T153, D173, and Q196. Position 197 is an N6-(pyridoxal phosphate)lysine (K197).

Belongs to the class-V pyridoxal-phosphate-dependent aminotransferase family. SerC subfamily. As to quaternary structure, homodimer. The cofactor is pyridoxal 5'-phosphate.

It localises to the cytoplasm. It carries out the reaction O-phospho-L-serine + 2-oxoglutarate = 3-phosphooxypyruvate + L-glutamate. It catalyses the reaction 4-(phosphooxy)-L-threonine + 2-oxoglutarate = (R)-3-hydroxy-2-oxo-4-phosphooxybutanoate + L-glutamate. It participates in amino-acid biosynthesis; L-serine biosynthesis; L-serine from 3-phospho-D-glycerate: step 2/3. The protein operates within cofactor biosynthesis; pyridoxine 5'-phosphate biosynthesis; pyridoxine 5'-phosphate from D-erythrose 4-phosphate: step 3/5. Functionally, catalyzes the reversible conversion of 3-phosphohydroxypyruvate to phosphoserine and of 3-hydroxy-2-oxo-4-phosphonooxybutanoate to phosphohydroxythreonine. The polypeptide is Phosphoserine aminotransferase (Legionella pneumophila (strain Corby)).